The primary structure comprises 318 residues: Ankyrin repeat and SOCS box protein 7 (318 aa).

ANK repeat units follow at residues 13–42, 46–75, 80–109, 116–145, 149–178, 180–208, and 213–242; these read QEELQIQAAVAAGDVHTVRKMLEQGYSPNG, NGWTLLHFSAARGKERCVRVFLEHGADPTV, GGFTALHYAAMHGRARIARLMLESEYRSDI, DGWTPLHVAAHYGRDSFVRLLLEFKAEVDP, KGTTPLQLAIIRERSSCVKILLDHNANIDI, NGFLLRYAVIKSNHSYCRMFLQRGADTNL, and DGQTPLHLSALRDDVLCARMLYNYGADTNT. Residues 265–318 form the SOCS box domain; that stretch reads LDFLQDVTRQPRTLQDLCRIKIRQCIGLQNLKLLDELPIAKVMKDYLKHKFDDI.

Belongs to the ankyrin SOCS box (ASB) family. Interacts with CUL5. Interacts with RNF7. Interacts with PSRC1.

Its subcellular location is the nucleus. It is found in the cytoplasm. Its pathway is protein modification; protein ubiquitination. Its function is as follows. Probable substrate-recognition component of a SCF-like ECS (Elongin-Cullin-SOCS-box protein) E3 ubiquitin-protein ligase complex which mediates the ubiquitination and subsequent proteasomal degradation of target proteins. Plays a role in spindle dynamics and genome integrity by targeting the mitotic progression protein PSRC1 for proteasomal degradation in a cell cycle-dependent manner. Also participates in meiosis by mediating the proper attachment between kinetochores and microtubules. The polypeptide is Ankyrin repeat and SOCS box protein 7 (Asb7) (Mus musculus (Mouse)).